We begin with the raw amino-acid sequence, 63 residues long: Cecropin-2 (63 aa).

A signal peptide spans 1-23 (MNFYKVFIFVALILAISLGQSEA). Arg-62 carries the arginine amide modification.

It belongs to the cecropin family.

The protein localises to the secreted. Its function is as follows. Cecropins have lytic and antibacterial activity against several Gram-positive and Gram-negative bacteria. The polypeptide is Cecropin-2 (Cec2A) (Drosophila virilis (Fruit fly)).